The primary structure comprises 458 residues: NADH-quinone oxidoreductase subunit N 1 (458 aa).

14 helical membrane passes run 12–32 (ALIP…AGLL), 37–57 (EVLV…IPSF), 70–90 (FLTI…LLVL), 101–121 (FNES…LVSA), 124–144 (LISF…LVGI), 159–179 (FMLG…IYGA), 199–219 (ILIG…LVPF), 230–250 (APTP…LGAF), 266–286 (SNFL…FALI), 293–313 (MLAY…IVGT), 321–341 (VAYM…VIAF), 361–381 (IAML…GFIV), 393–413 (GFTW…YYYL), and 438–458 (VAIL…LFLI).

Belongs to the complex I subunit 2 family. As to quaternary structure, NDH-1 is composed of 14 different subunits. Subunits NuoA, H, J, K, L, M, N constitute the membrane sector of the complex.

It is found in the cell inner membrane. The enzyme catalyses a quinone + NADH + 5 H(+)(in) = a quinol + NAD(+) + 4 H(+)(out). Functionally, NDH-1 shuttles electrons from NADH, via FMN and iron-sulfur (Fe-S) centers, to quinones in the respiratory chain. The immediate electron acceptor for the enzyme in this species is believed to be ubiquinone. Couples the redox reaction to proton translocation (for every two electrons transferred, four hydrogen ions are translocated across the cytoplasmic membrane), and thus conserves the redox energy in a proton gradient. This is NADH-quinone oxidoreductase subunit N 1 from Thermodesulfovibrio yellowstonii (strain ATCC 51303 / DSM 11347 / YP87).